The following is a 90-amino-acid chain: MDRRRMALRPGSRRPTAFFFHSRWLVPNLLAFFLGLSGAGPIHLPMPWPNGRRHRVLDPHTQLSTHEAPGRWKPVAPRTMKACPQVLLEW.

As to expression, highly expressed in prostate and testis. Also detected in placenta, muscle, colon, peripheral blood leukocytes and skin.

The protein resides in the nucleus. The sequence is that of Protein PRAC2 from Homo sapiens (Human).